Consider the following 359-residue polypeptide: Glycerol-3-phosphate dehydrogenase [NAD(P)+] (359 aa).

Positions 11, 12, 32, and 107 each coordinate NADPH. Sn-glycerol 3-phosphate is bound by residues lysine 107 and glycine 138. Residue alanine 142 coordinates NADPH. Lysine 193, aspartate 246, serine 256, arginine 257, and asparagine 258 together coordinate sn-glycerol 3-phosphate. Lysine 193 acts as the Proton acceptor in catalysis. An NADPH-binding site is contributed by arginine 257. Positions 281 and 283 each coordinate NADPH.

Belongs to the NAD-dependent glycerol-3-phosphate dehydrogenase family.

Its subcellular location is the cytoplasm. The catalysed reaction is sn-glycerol 3-phosphate + NAD(+) = dihydroxyacetone phosphate + NADH + H(+). It carries out the reaction sn-glycerol 3-phosphate + NADP(+) = dihydroxyacetone phosphate + NADPH + H(+). It participates in membrane lipid metabolism; glycerophospholipid metabolism. In terms of biological role, catalyzes the reduction of the glycolytic intermediate dihydroxyacetone phosphate (DHAP) to sn-glycerol 3-phosphate (G3P), the key precursor for phospholipid synthesis. In Dehalococcoides mccartyi (strain ATCC BAA-2266 / KCTC 15142 / 195) (Dehalococcoides ethenogenes (strain 195)), this protein is Glycerol-3-phosphate dehydrogenase [NAD(P)+].